Consider the following 362-residue polypeptide: Inactive 2'-5' oligoadenylate synthetase 1C (362 aa).

Belongs to the 2-5A synthase family. Expressed at highest level in brain with lesser amounts in spleen, kidney, stomach, liver, intestine, ovary, skin and testis. Not detected in lung, thymus, heart and uterus.

Does not have 2'-5'-OAS activity, but can bind double-stranded RNA. The chain is Inactive 2'-5' oligoadenylate synthetase 1C from Mus musculus (Mouse).